Consider the following 203-residue polypeptide: Large ribosomal subunit protein bL25 (203 aa).

Belongs to the bacterial ribosomal protein bL25 family. CTC subfamily. In terms of assembly, part of the 50S ribosomal subunit; part of the 5S rRNA/L5/L18/L25 subcomplex. Contacts the 5S rRNA. Binds to the 5S rRNA independently of L5 and L18.

Functionally, this is one of the proteins that binds to the 5S RNA in the ribosome where it forms part of the central protuberance. The protein is Large ribosomal subunit protein bL25 of Cupriavidus metallidurans (strain ATCC 43123 / DSM 2839 / NBRC 102507 / CH34) (Ralstonia metallidurans).